A 544-amino-acid chain; its full sequence is MSIFIGGAWPYANGSLHLGHIASLLPGDILARYYRAKGENVLYVSGSDCNGTPIAIRAKQEGVTAKEIANKYHEEFQRCFRNLGFTYDCYTRTDSEHHHKTVQKVFLRLLEEGHIYKKTVEQAYCETCTQFLPDRYVEGICPHCHEAARGDQCDACSAILDPLDLLEKKCKLCGSAPSVQETEHFYFALHTFQEQIKVAVETAKQTGTWRDNAIQLTERYVKEGLLDRAVSRDLPIGVPIPVEGYEDKKIYVWIEAVTGYYSASKHWAEKTGKDDQEFWDREAKTYYVHGKDNIPFHSIIWPAVLLGIGEGTIPRHIVSNEYLTVEKRKLSTSKNWAVWVPDILERYDPDSIRYFLTVNAPENRDTDFSWREFIYSHNSELLGAYGNFVNRTLKFIEKYYGGIVPKGSIDVELKDKIEGLYKHVGEAIEQTKFKVALEAIFDAVRFANKYFDERQPWKEREDDPVSCEETIYNCVYLIANFVNLLEPFLPFSSERVRNTLSIVKRNWEPQNTLPNRIDSVQPLFERIDVKQIECEIEKLYGAVK.

The 'HIGH' region signature appears at 10–20 (PYANGSLHLGH). Zn(2+) is bound by residues Cys141, Cys144, Cys153, and Cys156. The 'KMSKS' region signature appears at 329-333 (KLSTS). Residue Thr332 participates in ATP binding.

The protein belongs to the class-I aminoacyl-tRNA synthetase family. MetG type 1 subfamily. In terms of assembly, monomer. It depends on Zn(2+) as a cofactor.

The protein resides in the cytoplasm. The catalysed reaction is tRNA(Met) + L-methionine + ATP = L-methionyl-tRNA(Met) + AMP + diphosphate. In terms of biological role, is required not only for elongation of protein synthesis but also for the initiation of all mRNA translation through initiator tRNA(fMet) aminoacylation. This chain is Methionine--tRNA ligase 1, found in Bacillus cereus (strain ATCC 10987 / NRS 248).